The primary structure comprises 81 residues: Cytotoxin 1d/1e (81 aa).

The first 21 residues, 1 to 21, serve as a signal peptide directing secretion; the sequence is MKTLLLTLVVVTIVCLDLGYT. 4 cysteine pairs are disulfide-bonded: Cys-24–Cys-42, Cys-35–Cys-59, Cys-63–Cys-74, and Cys-75–Cys-80.

The protein belongs to the three-finger toxin family. Short-chain subfamily. Type IA cytotoxin sub-subfamily. In terms of assembly, monomer in solution; Homodimer and oligomer in the presence of negatively charged lipids forming a pore with a size ranging between 20 and 30 Angstroms. Expressed by the venom gland.

Its subcellular location is the secreted. It localises to the target cell membrane. Shows cytolytic activity on many different cells by forming pore in lipid membranes. In vivo, increases heart rate or kills the animal by cardiac arrest. In addition, it binds to heparin with high affinity, interacts with Kv channel-interacting protein 1 (KCNIP1) in a calcium-independent manner, and binds to integrin alpha-V/beta-3 (ITGAV/ITGB3) with moderate affinity. The protein is Cytotoxin 1d/1e of Naja atra (Chinese cobra).